Reading from the N-terminus, the 115-residue chain is NAD(P)H-quinone oxidoreductase subunit M (115 aa).

The protein belongs to the complex I NdhM subunit family. As to quaternary structure, NDH-1 can be composed of about 15 different subunits; different subcomplexes with different compositions have been identified which probably have different functions.

It is found in the cellular thylakoid membrane. It catalyses the reaction a plastoquinone + NADH + (n+1) H(+)(in) = a plastoquinol + NAD(+) + n H(+)(out). The catalysed reaction is a plastoquinone + NADPH + (n+1) H(+)(in) = a plastoquinol + NADP(+) + n H(+)(out). In terms of biological role, NDH-1 shuttles electrons from an unknown electron donor, via FMN and iron-sulfur (Fe-S) centers, to quinones in the respiratory and/or the photosynthetic chain. The immediate electron acceptor for the enzyme in this species is believed to be plastoquinone. Couples the redox reaction to proton translocation, and thus conserves the redox energy in a proton gradient. Cyanobacterial NDH-1 also plays a role in inorganic carbon-concentration. The chain is NAD(P)H-quinone oxidoreductase subunit M from Prochlorococcus marinus (strain MIT 9515).